Reading from the N-terminus, the 1030-residue chain is Germ cell nuclear acidic protein (1030 aa).

6 disordered regions span residues 1-59, 196-245, 266-361, 375-433, 457-594, and 699-764; these read MADH…TEDT, EWNG…TQLA, KRLA…VSSI, TMES…EQFL, LKRS…DLTY, and KLGI…PVAS. Positions 20 to 33 are enriched in basic and acidic residues; sequence APKDHPEKRNDQKT. Polar residues-rich tracts occupy residues 298–316 and 329–349; these read EPNT…TIHN and ETSS…STSG. Polar residues predominate over residues 505–516; the sequence is LRTNQTPLNSTR. Composition is skewed to basic and acidic residues over residues 541-553 and 578-594; these read NHID…KLID and DSDK…DLTY. The segment covering 720 to 748 has biased composition (low complexity); sequence TPKTAPPKGTAPPKTSAPPKVSTPPKSTK.

Belongs to the serine-aspartate repeat-containing protein (SDr) family.

The protein resides in the cytoplasm. It localises to the chromosome. Functionally, may play a role in DNA-protein cross-links (DPCs) clearance, ensuring the genomic stability by protecting germ cells and early embryos from various sources of damage. Limits replication stress and DNA double-strand breaks. This is Germ cell nuclear acidic protein from Drosophila melanogaster (Fruit fly).